The chain runs to 129 residues: MSATRYRRFLKLCEEWPKDESKKGRDLGTFLRQRVASAFREGENTQISDPEKCDQMYESLARINSNVYKEKFPRAKDTSFTGVTVEECRLLLATGSMQQTDEEKKGLWKTLMERFSSKPEDVPPEKAEK.

The N-terminal 13 residues, 1–13 (MSATRYRRFLKLC), are a transit peptide targeting the mitochondrion.

The protein localises to the mitochondrion matrix. Its subcellular location is the mitochondrion nucleoid. It is found in the mitochondrion. Its function is as follows. Required for the assembly of the ubiquinol-cytochrome c reductase complex (mitochondrial respiratory chain complex III or cytochrome b-c1 complex). May play a role in the modulation of respiratory chain activities such as oxygen consumption and ATP production. May be involved in cytochrome b translation and/or stability. This Danio rerio (Zebrafish) protein is Ubiquinol-cytochrome-c reductase complex assembly factor 2 (uqcc2).